The chain runs to 433 residues: Glutamate-1-semialdehyde 2,1-aminomutase (433 aa).

Lys273 is modified (N6-(pyridoxal phosphate)lysine).

The protein belongs to the class-III pyridoxal-phosphate-dependent aminotransferase family. HemL subfamily. In terms of assembly, homodimer. Pyridoxal 5'-phosphate is required as a cofactor.

It is found in the cytoplasm. It carries out the reaction (S)-4-amino-5-oxopentanoate = 5-aminolevulinate. It participates in porphyrin-containing compound metabolism; protoporphyrin-IX biosynthesis; 5-aminolevulinate from L-glutamyl-tRNA(Glu): step 2/2. It functions in the pathway porphyrin-containing compound metabolism; chlorophyll biosynthesis. The sequence is that of Glutamate-1-semialdehyde 2,1-aminomutase from Rippkaea orientalis (strain PCC 8801 / RF-1) (Cyanothece sp. (strain PCC 8801)).